A 513-amino-acid polypeptide reads, in one-letter code: ATP synthase subunit alpha (513 aa).

Residue 169 to 176 (GDRQTGKT) coordinates ATP.

Belongs to the ATPase alpha/beta chains family. In terms of assembly, F-type ATPases have 2 components, CF(1) - the catalytic core - and CF(0) - the membrane proton channel. CF(1) has five subunits: alpha(3), beta(3), gamma(1), delta(1), epsilon(1). CF(0) has three main subunits: a(1), b(2) and c(9-12). The alpha and beta chains form an alternating ring which encloses part of the gamma chain. CF(1) is attached to CF(0) by a central stalk formed by the gamma and epsilon chains, while a peripheral stalk is formed by the delta and b chains.

Its subcellular location is the cell inner membrane. The catalysed reaction is ATP + H2O + 4 H(+)(in) = ADP + phosphate + 5 H(+)(out). Functionally, produces ATP from ADP in the presence of a proton gradient across the membrane. The alpha chain is a regulatory subunit. This Bordetella pertussis (strain Tohama I / ATCC BAA-589 / NCTC 13251) protein is ATP synthase subunit alpha.